Here is a 475-residue protein sequence, read N- to C-terminus: MSPQTETKANVGFKAGVKDYKLTYYTPEYETLDTDILAAFRVSPQPGVPPEEAGAAVAAESSTGTWTTVWTDGLTSLDRYKGRCYHIEPVAGEENQYICYVAYPLDLFEEGSVTNMFTSIVGNVFGFKALRALRLEDLRIPVAYVKTFQGPPHGIQVERDKLNKYGRPLLGCTIKPKLGLSAKNYGRAVYEVLRGGLDFTKDDENVNSQPFMRWRDRFLFCAEALYKAQAETGEIKGHYLNATAGTCEDMMKRAVFARELGVPIVMHDYLTGGFTANTTLSHYCRDNGLLLHIHRAMHAVIDRQKNHGIHFRVLAKALRLSGGDHIHSGTVVGKLEGERDITLGFVDLLRDDYTEKDRSRGIYFSQSWVSTPGVLPVASGGIHVWHMPALTEIFGDDSVLQFGGGTLGHPWGNAPGAVANRVALEACVQARNEGRDLAREGNTIIREASKWSPELAAACEIWKEIKFEFPAMDTV.

A propeptide spanning residues 1–2 (MS) is cleaved from the precursor. P3 is modified (N-acetylproline). The residue at position 14 (K14) is an N6,N6,N6-trimethyllysine. Substrate is bound by residues N123 and T173. Catalysis depends on K175, which acts as the Proton acceptor. Position 177 (K177) interacts with substrate. Mg(2+) contacts are provided by K201, D203, and E204. K201 is subject to N6-carboxylysine. H294 functions as the Proton acceptor in the catalytic mechanism. R295, H327, and S379 together coordinate substrate.

This sequence belongs to the RuBisCO large chain family. Type I subfamily. As to quaternary structure, heterohexadecamer of 8 large chains and 8 small chains; disulfide-linked. The disulfide link is formed within the large subunit homodimers. Requires Mg(2+) as cofactor. Post-translationally, the disulfide bond which can form in the large chain dimeric partners within the hexadecamer appears to be associated with oxidative stress and protein turnover.

The protein resides in the plastid. Its subcellular location is the chloroplast. The catalysed reaction is 2 (2R)-3-phosphoglycerate + 2 H(+) = D-ribulose 1,5-bisphosphate + CO2 + H2O. It catalyses the reaction D-ribulose 1,5-bisphosphate + O2 = 2-phosphoglycolate + (2R)-3-phosphoglycerate + 2 H(+). In terms of biological role, ruBisCO catalyzes two reactions: the carboxylation of D-ribulose 1,5-bisphosphate, the primary event in carbon dioxide fixation, as well as the oxidative fragmentation of the pentose substrate in the photorespiration process. Both reactions occur simultaneously and in competition at the same active site. This Atriplex rosea (Red orache) protein is Ribulose bisphosphate carboxylase large chain.